The sequence spans 774 residues: Potassium/sodium hyperpolarization-activated cyclic nucleotide-gated channel 3 (774 aa).

A disordered region spans residues 1 to 48 (MEAEQRPAAGASEGATPGLEAVPPVAPPPATAASGPIPKSGPEPKRRH). Topologically, residues 1 to 97 (MEAEQRPAAG…PYSDFRFYWD (97 aa)) are cytoplasmic. Residues 46 to 91 (RRHLGTLLQPTVNKFSLRVFGSHKAVEIEQERVKSAGAWIIHPYSD) form an involved in subunit assembly region. The chain crosses the membrane as a helical span at residues 98–118 (LIMLLLMVGNLIVLPVGITFF). Topologically, residues 119–124 (KEENSP) are extracellular. The helical transmembrane segment at 125–145 (PWIVFNVLSDTFFLLDLVLNF) threads the bilayer. Residues 146 to 171 (RTGIVVEEGAEILLAPRAIRTRYLRT) lie on the Cytoplasmic side of the membrane. The chain crosses the membrane as a helical span at residues 172–192 (WFLVDLISSIPVDYIFLVVEL). At 193–201 (EPRLDAEVY) the chain is on the extracellular side. Residues 202–222 (KTARALRIVRFTKILSLLRLL) traverse the membrane as a helical; Voltage-sensor segment. The Cytoplasmic portion of the chain corresponds to 223-253 (RLSRLIRYIHQWEEIFHMTYDLASAVVRIFN). Residues 254 to 274 (LIGMMLLLCHWDGCLQFLVPM) traverse the membrane as a helical segment. At 275-297 (LQDFPPDCWVSINHMVNHSWGRQ) the chain is on the extracellular side. A glycan (N-linked (GlcNAc...) asparagine) is linked at Asn291. Positions 298–319 (YSHALFKAMSHMLCIGYGQQAP) form an intramembrane region, pore-forming. At 320–329 (VGMPDVWLTM) the chain is on the extracellular side. Residues 330 to 350 (LSMIVGATCYAMFIGHATALI) traverse the membrane as a helical segment. Over 351-774 (QSLDSSRRQY…PRGLQLSANM (424 aa)) the chain is Cytoplasmic. Residues 354–774 (DSSRRQYQEK…PRGLQLSANM (421 aa)) form an interaction with KCTD3 region. The 3',5'-cyclic AMP site is built by Gly492, Glu493, Cys495, Arg502, Thr503, Arg543, and Arg546. Ser634 carries the phosphoserine modification. Residues 682–774 (SLSRAGRSQV…PRGLQLSANM (93 aa)) are disordered. Pro residues predominate over residues 751-763 (TAQPPRPPVPEPA).

The protein belongs to the potassium channel HCN family. Homotetramer. The potassium channel is composed of a homo- or heterotetrameric complex of pore-forming subunits. Interacts with HCN11. Interacts with KCTD3; this interaction increases cell surface expression and current density of this channel. Interacts with PEX5L. In terms of tissue distribution, detected in brain.

It localises to the cell membrane. It catalyses the reaction K(+)(in) = K(+)(out). It carries out the reaction Na(+)(in) = Na(+)(out). Its activity is regulated as follows. Unlike HCN2 and HCN4, HCN3 is insensitive to cyclic nucleotides, such as cAMP or cGMP. This lack of sensitivity of HCN3, despite harboring a functional cyclic nucleotide-binding domain (CNBD), may be explained by its shorter C-terminal sequence, which may alter the normal autoinhibition of the channel. Inhibited by Cs(1+) and ZD7288. Phosphatidylinositol-4,5-bisphosphate (PIP(2)) shifts HCN3 activation to more depolarized potentials and accelerated activation kinetics. In terms of biological role, hyperpolarization-activated ion channel that are permeable to sodium and potassium ions, with an about 3:1 preference for potassium ions. Contributes to the native pacemaker currents in heart (If) and in neurons (Ih). In particular, plays a pivotal role in maintaining excitability and promoting rhythmic burst firing within hypothalamic nuclei. Exerts a significant influence on the configuration of the cardiac action potential waveform. Does not appear to play a prominent role in the processing of acute, neuropathic, or inflammatory pain. The chain is Potassium/sodium hyperpolarization-activated cyclic nucleotide-gated channel 3 (HCN3) from Homo sapiens (Human).